We begin with the raw amino-acid sequence, 201 residues long: Recombination protein RecR (201 aa).

The C4-type zinc-finger motif lies at 60 to 75; that stretch reads CSRCGNVDTVDPCTVC. Positions 83–178 constitute a Toprim domain; that stretch reads SVIIVVEDVA…KITRLAHGVP (96 aa).

Belongs to the RecR family.

Functionally, may play a role in DNA repair. It seems to be involved in an RecBC-independent recombinational process of DNA repair. It may act with RecF and RecO. The polypeptide is Recombination protein RecR (Rhizobium rhizogenes (strain K84 / ATCC BAA-868) (Agrobacterium radiobacter)).